The sequence spans 53 residues: uncharacterized protein (53 aa).

It localises to the plastid. The protein localises to the chloroplast. This is an uncharacterized protein from Guillardia theta (Cryptophyte).